The chain runs to 262 residues: Phosphonates import ATP-binding protein PhnC (262 aa).

In terms of domain architecture, ABC transporter spans 5 to 253 (IRVEKLAKTF…RFDHLYRSIN (249 aa)). ATP is bound at residue 37–44 (GPSGSGKS).

The protein belongs to the ABC transporter superfamily. Phosphonates importer (TC 3.A.1.9.1) family. In terms of assembly, the complex is composed of two ATP-binding proteins (PhnC), two transmembrane proteins (PhnE) and a solute-binding protein (PhnD).

It localises to the cell inner membrane. The catalysed reaction is phosphonate(out) + ATP + H2O = phosphonate(in) + ADP + phosphate + H(+). Its function is as follows. Part of the ABC transporter complex PhnCDE involved in phosphonates import. Responsible for energy coupling to the transport system. This chain is Phosphonates import ATP-binding protein PhnC, found in Escherichia coli O6:H1 (strain CFT073 / ATCC 700928 / UPEC).